A 297-amino-acid chain; its full sequence is Elongation factor Ts (297 aa).

The involved in Mg(2+) ion dislocation from EF-Tu stretch occupies residues 82-85 (TDFV).

Belongs to the EF-Ts family.

The protein resides in the cytoplasm. In terms of biological role, associates with the EF-Tu.GDP complex and induces the exchange of GDP to GTP. It remains bound to the aminoacyl-tRNA.EF-Tu.GTP complex up to the GTP hydrolysis stage on the ribosome. This Azoarcus sp. (strain BH72) protein is Elongation factor Ts.